A 347-amino-acid chain; its full sequence is Malate dehydrogenase, mitochondrial (347 aa).

A mitochondrion-targeting transit peptide spans 1 to 27; that stretch reads MKASILRSVRSAVSRSSSSNRLLSRSF. NAD(+) is bound by residues 41–47 and Asp67; that span reads GAAGGIG. Positions 114 and 120 each coordinate substrate. Residues Asn127 and 150 to 152 contribute to the NAD(+) site; that span reads ISN. The substrate site is built by Asn152 and Arg186. Residue His210 is the Proton acceptor of the active site. An NAD(+)-binding site is contributed by Met261.

Belongs to the LDH/MDH superfamily. MDH type 1 family. In terms of assembly, homodimer.

The protein resides in the mitochondrion matrix. It carries out the reaction (S)-malate + NAD(+) = oxaloacetate + NADH + H(+). The sequence is that of Malate dehydrogenase, mitochondrial (MMDH) from Citrullus lanatus (Watermelon).